The following is a 293-amino-acid chain: Phosphate import ATP-binding protein PstB (293 aa).

In terms of domain architecture, ABC transporter spans 46-288 (MTCRKVDVHY…PGHQLTEDYI (243 aa)). Residue 78–85 (GPSGCGKS) coordinates ATP.

Belongs to the ABC transporter superfamily. Phosphate importer (TC 3.A.1.7) family. In terms of assembly, the complex is composed of two ATP-binding proteins (PstB), two transmembrane proteins (PstC and PstA) and a solute-binding protein (PstS).

The protein resides in the cell inner membrane. The enzyme catalyses phosphate(out) + ATP + H2O = ADP + 2 phosphate(in) + H(+). Part of the ABC transporter complex PstSACB involved in phosphate import. Responsible for energy coupling to the transport system. The sequence is that of Phosphate import ATP-binding protein PstB from Desulfotalea psychrophila (strain LSv54 / DSM 12343).